Here is an 89-residue protein sequence, read N- to C-terminus: Small ribosomal subunit protein uS15 (89 aa).

Positions 1–23 (MSLDTTEKQQLINANQTHGTDTG) are disordered. Polar residues predominate over residues 8-23 (KQQLINANQTHGTDTG).

Belongs to the universal ribosomal protein uS15 family. As to quaternary structure, part of the 30S ribosomal subunit. Forms a bridge to the 50S subunit in the 70S ribosome, contacting the 23S rRNA.

Functionally, one of the primary rRNA binding proteins, it binds directly to 16S rRNA where it helps nucleate assembly of the platform of the 30S subunit by binding and bridging several RNA helices of the 16S rRNA. Forms an intersubunit bridge (bridge B4) with the 23S rRNA of the 50S subunit in the ribosome. The polypeptide is Small ribosomal subunit protein uS15 (Prochlorococcus marinus (strain MIT 9313)).